The primary structure comprises 213 residues: Protein nullo (213 aa).

In terms of tissue distribution, blastoderm. Throughout the entire cortex of the embryo although the distribution is not uniform.

In terms of biological role, actin-myosin network stability during cellularization. Might be involved in increasing actin-actin interactions or membrane-to-cytoskeleton attachments. nullo together with Sry-a and bnk may provide auxiliary functions, by acting both to stabilize a large and dynamic microfilament structure and regulate its functions. The sequence is that of Protein nullo (nullo) from Drosophila melanogaster (Fruit fly).